The sequence spans 120 residues: NAD(P)H-quinone oxidoreductase subunit 3, chloroplastic (120 aa).

The next 3 membrane-spanning stretches (helical) occupy residues 9-29, 64-84, and 88-108; these read IFWA…XISG, MFAL…PWAM, and VLGV…IVGL.

This sequence belongs to the complex I subunit 3 family. As to quaternary structure, NDH is composed of at least 16 different subunits, 5 of which are encoded in the nucleus.

The protein resides in the plastid. Its subcellular location is the chloroplast thylakoid membrane. It catalyses the reaction a plastoquinone + NADH + (n+1) H(+)(in) = a plastoquinol + NAD(+) + n H(+)(out). It carries out the reaction a plastoquinone + NADPH + (n+1) H(+)(in) = a plastoquinol + NADP(+) + n H(+)(out). NDH shuttles electrons from NAD(P)H:plastoquinone, via FMN and iron-sulfur (Fe-S) centers, to quinones in the photosynthetic chain and possibly in a chloroplast respiratory chain. The immediate electron acceptor for the enzyme in this species is believed to be plastoquinone. Couples the redox reaction to proton translocation, and thus conserves the redox energy in a proton gradient. This chain is NAD(P)H-quinone oxidoreductase subunit 3, chloroplastic, found in Eucalyptus globulus subsp. globulus (Tasmanian blue gum).